A 267-amino-acid polypeptide reads, in one-letter code: MEDINFASLAPRHGSRPFMGTWNEIGTSQLNGGAFSWSSLWSGIKNFGSSIKSFGNKAWNSNTGQMLRDKLKDQNFQQKVVDGLASGINGVVDIANQALQNQINQRLENSRQPPVALQQRPPPKVEEVEVEEKLPPLEVAPPLPSKGEKRPRPDLEETLVVESREPPSYEQALKEGASPYPMTKPIGSMARPVYGKESKPVTLELPPPVPTVPPMPAPTLGTAVSRPTAPTVAVATPARRPRGANWQSTLNSIVGLGVKSLKRRRCY.

The propeptide occupies 1 to 33 (MEDINFASLAPRHGSRPFMGTWNEIGTSQLNGG). The segment at 34 to 54 (AFSWSSLWSGIKNFGSSIKSF) is amphipathic alpha-helix essential for membrane lytic activity. Residues 36 to 53 (SWSSLWSGIKNFGSSIKS) are involved in endosomal membrane lysis. An interaction with hexon protein region spans residues 48–74 (GSSIKSFGNKAWNSNTGQMLRDKLKDQ). The Nuclear export signal signature appears at 67–76 (LRDKLKDQNF). Disordered regions lie at residues 107–184 (LENS…PMTK) and 199–230 (KPVT…PTAP). 2 stretches are compositionally biased toward basic and acidic residues: residues 123–135 (PKVE…EKLP) and 146–155 (KGEKRPRPDL). The short motif at 149–153 (KRPRP) is the Nuclear localization signal element. Residues 166-169 (PPSY) carry the PPXY motif motif. Over residues 205-217 (LPPPVPTVPPMPA) the composition is skewed to pro residues. Over residues 218–230 (PTLGTAVSRPTAP) the composition is skewed to low complexity. Residues 248 to 259 (STLNSIVGLGVK) carry the Nuclear export signal motif. Residues 250 to 256 (LNSIVGL) form an interaction with hexon protein region. Positions 257-267 (GVKSLKRRRCY) are binds to importin alpha/beta, involved in hexon nuclear import. Positions 262–265 (KRRR) match the Nuclear localization signal motif.

The protein belongs to the adenoviridae protein VI family. In terms of assembly, interacts with hexon protein; this interaction allows nuclear import of hexon trimers and possibly pre-capsid assembly. Interacts (via C-terminal NLS) with importin alpha/beta. Interacts (via PPxY motif) with host NEDD4 ubiquitine ligase; this interaction might play a role in virus intracellular transport during entry. Part of a complex composed of the core-capsid bridging protein, the endosome lysis protein VI and the hexon-linking protein VIII; these interactions bridge the virus core to the capsid. Interacts with peripentonal hexons; this interaction stabilizes the capsid by gluing two peripentonal hexons together and joining them with an adjacent group-of-nine hexon. As to quaternary structure, heterodimer with the viral protease; disulfide-linked. Interacts with the viral protease. In terms of processing, ubiquitinated by Nedd4 following partial capsid disassembly; which might play a role in intracellular virus movement during entry. Contains the major nuclear import and export signals. Proteolytically removed during virion maturation. The processing of the C-terminus turns the precursor into a mature viral structural protein and abrogates its ability to promote hexon import and act as a potential chaperone protein.

The protein localises to the host nucleus. It is found in the host cytoplasm. It localises to the virion. In terms of biological role, during virus assembly, promotes hexon trimers nuclear import through nuclear pore complexes via an importin alpha/beta-dependent mechanism. By analogy to herpesviruses capsid assembly, might act as a chaperone to promote the formation of the icosahedral capsid. Structural component of the virion that provides increased stability to the particle shell through its interaction with the core-capsid bridging protein and the hexon-linking protein VIII. Fibers shedding during virus entry into host cell allows the endosome lysis protein to be exposed as a membrane-lytic peptide. Exhibits pH-independent membrane fragmentation activity and probably mediates viral rapid escape from host endosome via organellar membrane lysis. It is not clear if it then remains partially associated with the capsid and involved in the intracellular microtubule-dependent transport of capsid to the nucleus, or if it is lost during endosomal penetration. Functionally, cofactor that activates the viral protease. Binds to viral protease in a 1:1 ratio. The protein is Pre-protein VI of Homo sapiens (Human).